The primary structure comprises 273 residues: Aegyptin (273 aa).

An N-terminal signal peptide occupies residues 1–19 (MKPLVKLFLLFCLVGIVLS). The interval 20 to 160 (RPMPEDEEPV…SEKNDPADTY (141 aa)) is disordered. Positions 24–62 (EDEEPVAEGGDDDASGESEGEEETTDDAGGDGGEEENEG) are enriched in acidic residues. Positions 63 to 86 (EEHAGDKDAGGEDTGKEENTGHDD) are enriched in basic and acidic residues. Residues 87 to 145 (AGEEDAGEEDAGEEDAGEEDAGEEDAEKEEGEKEDAGDDAGSDDGEEDSTGGDEGEDNA) are compositionally biased toward acidic residues. A mediates binding of host collagen region spans residues 137 to 273 (GGDEGEDNAE…IKSCVSSKGR (137 aa)). Over residues 146–158 (EDSKGSEKNDPAD) the composition is skewed to basic and acidic residues. Disulfide bonds link C213/C267 and C235/C245.

Belongs to the aegyptin family. As to quaternary structure, monomer; exhibits non-globular elongated shape in solution. In terms of tissue distribution, female saliva (at protein level). Adult female salivary gland (at protein level).

The protein resides in the secreted. Modulates blood feeding of female mosquitoes on vertebrate hosts. Inhibits collagen-induced platelet aggregation in the host via preventing collagen interaction with its three major ligands: glycoprotein VI, integrin alpha-2/beta-1 (ITGA2/ITGB1) and von Willebrand factor (VWF). Prevents collagen-mediated thrombus formation in the host. Binds to host collagens but not to laminin, vitronectin (VTN), fibronectin (FN1), von Willebrand factor (VWF) and fibrinogen. Influences cytokine production and populations of circulating leukocytes. Functionally, (Microbial infection) Reduces replication of dengue virus type 2 at inoculation site and viremia levels on day 2 post-inoculation. Promotes production of pro-inflammatory cytokines, such as GM-CSF (CSF2), IFN-gamma (IFNG), IL5 and IL6, in the lymph nodes of mice infected with dengue virus type 2. Increases the number of circulating eosinophils in mice infected with dengue virus type 2. Decreases the number of circulating monocytes in mice infected with dengue virus type 2. The protein is Aegyptin of Aedes aegypti (Yellowfever mosquito).